Consider the following 338-residue polypeptide: Large ribosomal subunit protein uL10 (338 aa).

Residues 303 to 338 (VEVSAAPAAEEEKEEEKKEEEKKEEDTGAAGLALLF) form a disordered region. Over residues 317–328 (EEKKEEEKKEED) the composition is skewed to basic and acidic residues.

This sequence belongs to the universal ribosomal protein uL10 family. In terms of assembly, part of the 50S ribosomal subunit. Forms part of the ribosomal stalk which helps the ribosome interact with GTP-bound translation factors. Forms a heptameric L10(L12)2(L12)2(L12)2 complex, where L10 forms an elongated spine to which the L12 dimers bind in a sequential fashion.

Its function is as follows. Forms part of the ribosomal stalk, playing a central role in the interaction of the ribosome with GTP-bound translation factors. In Methanocaldococcus jannaschii (strain ATCC 43067 / DSM 2661 / JAL-1 / JCM 10045 / NBRC 100440) (Methanococcus jannaschii), this protein is Large ribosomal subunit protein uL10.